We begin with the raw amino-acid sequence, 450 residues long: NADP-specific glutamate dehydrogenase (450 aa).

Lys111 is an active-site residue.

This sequence belongs to the Glu/Leu/Phe/Val dehydrogenases family. In terms of assembly, homohexamer.

The catalysed reaction is L-glutamate + NADP(+) + H2O = 2-oxoglutarate + NH4(+) + NADPH + H(+). This is NADP-specific glutamate dehydrogenase from Hebeloma cylindrosporum.